We begin with the raw amino-acid sequence, 40 residues long: Photosystem II reaction center protein J (40 aa).

Residues 8 to 28 (IPLWIIGTVTGIIVIGLIGIF) traverse the membrane as a helical segment.

It belongs to the PsbJ family. As to quaternary structure, PSII is composed of 1 copy each of membrane proteins PsbA, PsbB, PsbC, PsbD, PsbE, PsbF, PsbH, PsbI, PsbJ, PsbK, PsbL, PsbM, PsbT, PsbX, PsbY, PsbZ, Psb30/Ycf12, at least 3 peripheral proteins of the oxygen-evolving complex and a large number of cofactors. It forms dimeric complexes.

The protein localises to the plastid. It is found in the chloroplast thylakoid membrane. In terms of biological role, one of the components of the core complex of photosystem II (PSII). PSII is a light-driven water:plastoquinone oxidoreductase that uses light energy to abstract electrons from H(2)O, generating O(2) and a proton gradient subsequently used for ATP formation. It consists of a core antenna complex that captures photons, and an electron transfer chain that converts photonic excitation into a charge separation. The protein is Photosystem II reaction center protein J of Morus indica (Mulberry).